The following is a 290-amino-acid chain: Putative phosphoenolpyruvate synthase regulatory protein (290 aa).

170–177 (GVSRCGKT) is a binding site for ADP.

It belongs to the pyruvate, phosphate/water dikinase regulatory protein family. PSRP subfamily.

It carries out the reaction [pyruvate, water dikinase] + ADP = [pyruvate, water dikinase]-phosphate + AMP + H(+). The catalysed reaction is [pyruvate, water dikinase]-phosphate + phosphate + H(+) = [pyruvate, water dikinase] + diphosphate. In terms of biological role, bifunctional serine/threonine kinase and phosphorylase involved in the regulation of the phosphoenolpyruvate synthase (PEPS) by catalyzing its phosphorylation/dephosphorylation. This Enterobacter agglomerans (Erwinia herbicola) protein is Putative phosphoenolpyruvate synthase regulatory protein (ydiA).